The sequence spans 96 residues: Putative septation protein SpoVG (96 aa).

The protein belongs to the SpoVG family.

Essential for sporulation. Interferes with or is a negative regulator of the pathway leading to asymmetric septation. In Priestia megaterium (Bacillus megaterium), this protein is Putative septation protein SpoVG.